A 384-amino-acid chain; its full sequence is Geranylgeranyl pyrophosphate synthase (384 aa).

Disordered stretches follow at residues 1 to 25 (MVPN…TSST) and 39 to 78 (RPVP…PARY). The segment covering 47–62 (LGQNNTRNRSSSTTAI) has biased composition (polar residues). Residues K112, R115, and H144 each contribute to the isopentenyl diphosphate site. Positions 151 and 155 each coordinate Mg(2+). R160 lines the dimethylallyl diphosphate pocket. R161 contacts isopentenyl diphosphate. Residues K238, T239, and Q272 each contribute to the dimethylallyl diphosphate site. D275 lines the Mg(2+) pocket. Residues N279, K289, and K299 each coordinate dimethylallyl diphosphate.

The protein belongs to the FPP/GGPP synthase family. The cofactor is Mg(2+).

The catalysed reaction is isopentenyl diphosphate + dimethylallyl diphosphate = (2E)-geranyl diphosphate + diphosphate. It carries out the reaction isopentenyl diphosphate + (2E)-geranyl diphosphate = (2E,6E)-farnesyl diphosphate + diphosphate. It catalyses the reaction isopentenyl diphosphate + (2E,6E)-farnesyl diphosphate = (2E,6E,10E)-geranylgeranyl diphosphate + diphosphate. Its pathway is secondary metabolite biosynthesis. Functionally, catalyzes the trans-addition of the 3 molecules of isopentenyl diphosphate (IPP) onto dimethylallyl diphosphate (DMAPP) to form geranylgeranyl pyrophosphate (GGPP). GGPP is a precursor for the biosynthesis of many secondary metabolites, including the indole diterpenes nodulisporic acids (NA). In Hypoxylon pulicicidum, this protein is Geranylgeranyl pyrophosphate synthase.